The chain runs to 281 residues: MEKLKALIEVTKPKQTFLLMITFLVSYIVARGGADFNFVIAAISMFLAISGTTAINMWLDRDIDAIMPRTRKRPVPAGILKPSECAAFGAAIFAIGQVLAFLVSLEFGLVVFFGLFFDIVVYTILLKRKSPYSIVLGGFAGAMPALGGWVAVQGFTLPGFIIAAIVLLWIPSHIWYISMHYEEDYRMANIPMYPLVVGMERASWAIVFATAAMLVLAASLYVLLPLGIFYLVISTSAVAFFLYKAVKFALSPDRVKARKMYKLASMTLGLVYFSLLLGVFL.

9 helical membrane passes run T16–F36, F38–W58, V75–I95, F101–V121, K129–W149, V150–I170, A202–L224, I228–L250, and Y261–L281.

Belongs to the UbiA prenyltransferase family. Protoheme IX farnesyltransferase subfamily.

Its subcellular location is the cell membrane. The enzyme catalyses heme b + (2E,6E)-farnesyl diphosphate + H2O = Fe(II)-heme o + diphosphate. Its pathway is porphyrin-containing compound metabolism; heme O biosynthesis; heme O from protoheme: step 1/1. Converts heme B (protoheme IX) to heme O by substitution of the vinyl group on carbon 2 of heme B porphyrin ring with a hydroxyethyl farnesyl side group. This is Protoheme IX farnesyltransferase from Archaeoglobus fulgidus (strain ATCC 49558 / DSM 4304 / JCM 9628 / NBRC 100126 / VC-16).